The chain runs to 356 residues: Poly(rC)-binding protein 1 (356 aa).

Residue methionine 1 is modified to N-acetylmethionine. KH domains follow at residues 13–75 (TLTI…FAMI) and 97–162 (PVTL…VKQI). Lysine 115 is covalently cross-linked (Glycyl lysine isopeptide (Lys-Gly) (interchain with G-Cter in SUMO2)). Phosphoserine occurs at positions 173, 189, 190, 246, 264, and 273. The region spanning 279–343 (QTTHELTIPN…ASISLAQYLI (65 aa)) is the KH 3 domain.

In terms of processing, phosphorylated; lowers poly(rC)-binding activity.

The protein localises to the nucleus. Its subcellular location is the cytoplasm. Functionally, single-stranded nucleic acid binding protein that binds preferentially to oligo dC. Together with PCBP2, required for erythropoiesis, possibly by regulating mRNA splicing. The chain is Poly(rC)-binding protein 1 (PCBP1) from Bos taurus (Bovine).